We begin with the raw amino-acid sequence, 1559 residues long: Fatty acid synthase alpha subunit stcJ (1559 aa).

The Carrier domain occupies 68–147 (DTPLTAIFII…AALGEVSLGP (80 aa)). Ser-106 bears the O-(pantetheine 4'-phosphoryl)serine mark. The tract at residues 457 to 693 (NHTYLITGAG…SLLLTPQLAT (237 aa)) is ketoreductase (KR) domain. A Ketosynthase family 3 (KS3) domain is found at 873-1327 (REVFQEIVLE…QKEAQLVGVH (455 aa)). Cys-1058 serves as the catalytic For beta-ketoacyl synthase activity. Residues 1105 to 1117 (VRDEQARGREPGE) show a composition bias toward basic and acidic residues. Residues 1105–1125 (VRDEQARGREPGEMSRPTAAS) form a disordered region. Catalysis depends on for beta-ketoacyl synthase activity residues His-1212 and His-1253. Asp-1432 is a binding site for Mg(2+). Acetyl-CoA-binding positions include 1432–1434 (DTV), 1480–1490 (EAVFKCLQTVS), 1504–1506 (RVQ), and 1532–1534 (LSY). Residue Ser-1533 participates in Mg(2+) binding.

This sequence belongs to the thiolase-like superfamily. Fungal fatty acid synthetase subunit alpha family. In terms of assembly, [Alpha(6)beta(6)] hexamers of two multifunctional subunits (alpha and beta).

It catalyses the reaction acetyl-CoA + n malonyl-CoA + 2n NADPH + 4n H(+) = a long-chain-acyl-CoA + n CoA + n CO2 + 2n NADP(+).. The enzyme catalyses a fatty acyl-[ACP] + malonyl-[ACP] + H(+) = a 3-oxoacyl-[ACP] + holo-[ACP] + CO2. The catalysed reaction is a (3R)-hydroxyacyl-[ACP] + NADP(+) = a 3-oxoacyl-[ACP] + NADPH + H(+). The protein operates within mycotoxin biosynthesis; sterigmatocystin biosynthesis. Its function is as follows. Fatty acid synthase alpha subunit; part of the gene cluster that mediates the biosynthesis of sterigmatocystin (ST), a polyketide-derived furanocoumarin which is part of the most toxic and carcinogenic compounds among the known mycotoxins. The first step in the biosynthesis of sterigmatocystin is the production of hexanoate by the fatty acid synthase (FAS) units stcJ and stcK. The polyketide backbone is assembled by the non-reducing polyketide synthase stcA by condensation of the starter hexanoyl-CoA and 7 malonyl-CoA extender units followed by cyclization and release of norsolorinic acid. Norsolorinic acid is the first stable intermediate in the biosynthesis of sterigmatocystin and is converted into averantin (AVN) by the ketoreductase stcE which reduces the hexanoate ketone to an alcohol. Averantin is then oxidized into 5'-hydroxyaverantin (HAVN) by the cytochrome P450 monooxygenase stcF. 5'-hydroxyaverantin is further converted to 5'-oxyaverantin (OAVN) by the 5'-hydroxyaverantin dehydrogenase stcG. The next step is the conversion of OAVN into averufin (AVF) which is catalyzed by a yet to be identified enzyme. The cytochrome P450 monooxygenase stcB and the flavin-binding monooxygenase stcW are both required for the conversion of averufin to 1-hydroxyversicolorone. The esterase stcI probably catalyzes the formation of versiconal hemiacetal acetate from 1-hydroxyversicolorone. The oxydoreductase stcN then probably catalyzes the biosynthetic step from versiconal to versicolorin B (VERB). The next step is performed by the versicolorin B desaturase stcL to produce versicolorin A (VERA). The ketoreductase stcU and the cytochrome P450 monooxygenase stcS are involved in the conversion of versicolorin A to demethylsterigmatocystin. The Baeyer-Villiger oxidas stcQ and the reductase stcR might be involved in the biosynthetic step from versicolorin A to demethylsterigmatocystin. The final step in the biosynthesis of sterigmatocystin is the methylation of demethylsterigmatocystin catalyzed by the methyltransferase stcP. This Emericella nidulans (strain FGSC A4 / ATCC 38163 / CBS 112.46 / NRRL 194 / M139) (Aspergillus nidulans) protein is Fatty acid synthase alpha subunit stcJ.